A 206-amino-acid polypeptide reads, in one-letter code: Thiamine-phosphate synthase (206 aa).

4-amino-2-methyl-5-(diphosphooxymethyl)pyrimidine contacts are provided by residues 38-42 and Asn70; that span reads QLRAK. The Mg(2+) site is built by Asp71 and Asp90. Ser107 provides a ligand contact to 4-amino-2-methyl-5-(diphosphooxymethyl)pyrimidine. Residue 133-135 coordinates 2-[(2R,5Z)-2-carboxy-4-methylthiazol-5(2H)-ylidene]ethyl phosphate; sequence TTT. 4-amino-2-methyl-5-(diphosphooxymethyl)pyrimidine is bound at residue Lys136. 2-[(2R,5Z)-2-carboxy-4-methylthiazol-5(2H)-ylidene]ethyl phosphate-binding positions include Gly164 and 184–185; that span reads VS.

The protein belongs to the thiamine-phosphate synthase family. The cofactor is Mg(2+).

It catalyses the reaction 2-[(2R,5Z)-2-carboxy-4-methylthiazol-5(2H)-ylidene]ethyl phosphate + 4-amino-2-methyl-5-(diphosphooxymethyl)pyrimidine + 2 H(+) = thiamine phosphate + CO2 + diphosphate. The catalysed reaction is 2-(2-carboxy-4-methylthiazol-5-yl)ethyl phosphate + 4-amino-2-methyl-5-(diphosphooxymethyl)pyrimidine + 2 H(+) = thiamine phosphate + CO2 + diphosphate. The enzyme catalyses 4-methyl-5-(2-phosphooxyethyl)-thiazole + 4-amino-2-methyl-5-(diphosphooxymethyl)pyrimidine + H(+) = thiamine phosphate + diphosphate. It functions in the pathway cofactor biosynthesis; thiamine diphosphate biosynthesis; thiamine phosphate from 4-amino-2-methyl-5-diphosphomethylpyrimidine and 4-methyl-5-(2-phosphoethyl)-thiazole: step 1/1. Condenses 4-methyl-5-(beta-hydroxyethyl)thiazole monophosphate (THZ-P) and 2-methyl-4-amino-5-hydroxymethyl pyrimidine pyrophosphate (HMP-PP) to form thiamine monophosphate (TMP). The chain is Thiamine-phosphate synthase from Herpetosiphon aurantiacus (strain ATCC 23779 / DSM 785 / 114-95).